The sequence spans 310 residues: Ribosomal RNA small subunit methyltransferase H (310 aa).

Residues 32-34 (GGH), D52, F79, D100, and Q107 contribute to the S-adenosyl-L-methionine site.

The protein belongs to the methyltransferase superfamily. RsmH family.

It is found in the cytoplasm. The enzyme catalyses cytidine(1402) in 16S rRNA + S-adenosyl-L-methionine = N(4)-methylcytidine(1402) in 16S rRNA + S-adenosyl-L-homocysteine + H(+). Specifically methylates the N4 position of cytidine in position 1402 (C1402) of 16S rRNA. In Geobacillus kaustophilus (strain HTA426), this protein is Ribosomal RNA small subunit methyltransferase H.